The primary structure comprises 370 residues: 3-dehydroquinate synthase (370 aa).

NAD(+) contacts are provided by residues 112–116 (GVIGD), 136–137 (TT), Lys149, Lys158, and 176–179 (TLAT). Residues Glu191, His254, and His276 each coordinate Zn(2+).

This sequence belongs to the sugar phosphate cyclases superfamily. Dehydroquinate synthase family. Requires Co(2+) as cofactor. The cofactor is Zn(2+). NAD(+) is required as a cofactor.

Its subcellular location is the cytoplasm. The catalysed reaction is 7-phospho-2-dehydro-3-deoxy-D-arabino-heptonate = 3-dehydroquinate + phosphate. It participates in metabolic intermediate biosynthesis; chorismate biosynthesis; chorismate from D-erythrose 4-phosphate and phosphoenolpyruvate: step 2/7. Functionally, catalyzes the conversion of 3-deoxy-D-arabino-heptulosonate 7-phosphate (DAHP) to dehydroquinate (DHQ). In Xylella fastidiosa (strain M23), this protein is 3-dehydroquinate synthase.